The following is a 60-amino-acid chain: Mating pheromone En-2 (60 aa).

Cystine bridges form between C11–C39, C24–C35, C31–C57, and C36–C48.

The protein localises to the secreted. Its function is as follows. Mating ciliate pheromones (or gamones) are diffusible extracellular communication signals that distinguish different intraspecific classes of cells commonly referred to as 'mating types'. They prepare the latter for conjugation by changing their cell surface properties. This Euplotes nobilii (Ciliate) protein is Mating pheromone En-2.